Here is a 221-residue protein sequence, read N- to C-terminus: Oxaloacetate tautomerase FAHD1, mitochondrial (221 aa).

The N-terminal 24 residues, Met1–Tyr24, are a transit peptide targeting the mitochondrion. Ser37 is modified (phosphoserine). Residues Glu68, Glu70, and Asp99 each coordinate Mg(2+). Lys110 is modified (N6-acetyllysine). Lys112 bears the N6-succinyllysine mark.

The protein belongs to the FAH family. As to quaternary structure, homodimer. It depends on Mg(2+) as a cofactor. Mn(2+) is required as a cofactor.

It is found in the mitochondrion. It localises to the cytoplasm. The protein localises to the cytosol. It carries out the reaction oxaloacetate = enol-oxaloacetate. It catalyses the reaction oxaloacetate + H(+) = pyruvate + CO2. The enzyme catalyses a 3-acylpyruvate + H2O = a carboxylate + pyruvate + H(+). The catalysed reaction is acetylpyruvate + H2O = acetate + pyruvate + H(+). It carries out the reaction 3-fumarylpyruvate + H2O = fumarate + pyruvate + H(+). With respect to regulation, oxaloacetate decarboxylation is competitively inhibited by oxalate. Its function is as follows. Tautomerase that converts enol-oxaloacetate, a strong inhibitor of succinate dehydrogenase, to the physiological keto form of oxaloacetate. It is thereby required to maximize aerobic respiration efficiency by preventing succinate dehydrogenase inhibition. Also acts as a weak oxaloacetate decarboxylase (ODx), catalyzing the decarboxylation of oxaloacetate (OAA) to pyruvate and CO(2), and as such is likely a regulatory enzyme in the TCA cycle. Also displays acylpyruvase activity, being able to hydrolyze acetylpyruvate and fumarylpyruvate in vitro. This Pongo abelii (Sumatran orangutan) protein is Oxaloacetate tautomerase FAHD1, mitochondrial (FAHD1).